The primary structure comprises 365 residues: UDP-N-acetylglucosamine--N-acetylmuramyl-(pentapeptide) pyrophosphoryl-undecaprenol N-acetylglucosamine transferase (365 aa).

UDP-N-acetyl-alpha-D-glucosamine is bound by residues 19–21, N131, R170, S201, I255, 274–279, and Q300; these read TGG and ALTVTE.

This sequence belongs to the glycosyltransferase 28 family. MurG subfamily.

It localises to the cell inner membrane. The enzyme catalyses di-trans,octa-cis-undecaprenyl diphospho-N-acetyl-alpha-D-muramoyl-L-alanyl-D-glutamyl-meso-2,6-diaminopimeloyl-D-alanyl-D-alanine + UDP-N-acetyl-alpha-D-glucosamine = di-trans,octa-cis-undecaprenyl diphospho-[N-acetyl-alpha-D-glucosaminyl-(1-&gt;4)]-N-acetyl-alpha-D-muramoyl-L-alanyl-D-glutamyl-meso-2,6-diaminopimeloyl-D-alanyl-D-alanine + UDP + H(+). It functions in the pathway cell wall biogenesis; peptidoglycan biosynthesis. Functionally, cell wall formation. Catalyzes the transfer of a GlcNAc subunit on undecaprenyl-pyrophosphoryl-MurNAc-pentapeptide (lipid intermediate I) to form undecaprenyl-pyrophosphoryl-MurNAc-(pentapeptide)GlcNAc (lipid intermediate II). This Acinetobacter baumannii (strain SDF) protein is UDP-N-acetylglucosamine--N-acetylmuramyl-(pentapeptide) pyrophosphoryl-undecaprenol N-acetylglucosamine transferase.